The sequence spans 285 residues: Probable endonuclease 4 (285 aa).

9 residues coordinate Zn(2+): His69, His109, Glu145, Asp179, His182, His216, Asp229, His231, and Glu261.

This sequence belongs to the AP endonuclease 2 family. The cofactor is Zn(2+).

The catalysed reaction is Endonucleolytic cleavage to 5'-phosphooligonucleotide end-products.. Its function is as follows. Endonuclease IV plays a role in DNA repair. It cleaves phosphodiester bonds at apurinic or apyrimidinic (AP) sites, generating a 3'-hydroxyl group and a 5'-terminal sugar phosphate. This is Probable endonuclease 4 from Salmonella arizonae (strain ATCC BAA-731 / CDC346-86 / RSK2980).